The chain runs to 291 residues: Small ribosomal subunit protein uS2 (291 aa).

A compositionally biased stretch (acidic residues) spans 238-247 (DEESGDELDE). The segment at 238-291 (DEESGDELDESVSLHEEGREITDYENYTPPEEREYSVNDEGDVFDEDESLYEGR) is disordered. Basic and acidic residues predominate over residues 249 to 259 (VSLHEEGREIT). Residues 274 to 291 (VNDEGDVFDEDESLYEGR) show a composition bias toward acidic residues.

The protein belongs to the universal ribosomal protein uS2 family.

This chain is Small ribosomal subunit protein uS2 (rpsB), found in Treponema pallidum (strain Nichols).